The chain runs to 285 residues: 4-diphosphocytidyl-2-C-methyl-D-erythritol kinase (285 aa).

Lys-10 is a catalytic residue. 93-103 serves as a coordination point for ATP; that stretch reads PIGGGLGGGSS. The active site involves Asp-135.

Belongs to the GHMP kinase family. IspE subfamily.

It carries out the reaction 4-CDP-2-C-methyl-D-erythritol + ATP = 4-CDP-2-C-methyl-D-erythritol 2-phosphate + ADP + H(+). The protein operates within isoprenoid biosynthesis; isopentenyl diphosphate biosynthesis via DXP pathway; isopentenyl diphosphate from 1-deoxy-D-xylulose 5-phosphate: step 3/6. In terms of biological role, catalyzes the phosphorylation of the position 2 hydroxy group of 4-diphosphocytidyl-2C-methyl-D-erythritol. The polypeptide is 4-diphosphocytidyl-2-C-methyl-D-erythritol kinase (Vesicomyosocius okutanii subsp. Calyptogena okutanii (strain HA)).